Here is a 64-residue protein sequence, read N- to C-terminus: Phylloxin-S1 (64 aa).

A signal peptide spans 1–22; that stretch reads MVFLKKSLLLVLFVGLVSLSIC. Residues 23 to 44 constitute a propeptide that is removed on maturation; it reads EENKREEHEEVEENAEKAEEKR. Glutamine amide is present on glutamine 63.

In terms of tissue distribution, expressed by the skin glands.

It localises to the secreted. Antimicrobial peptide against both Gram-positive and Gram-negative bacteria. This Phyllomedusa sauvagei (Sauvage's leaf frog) protein is Phylloxin-S1.